A 440-amino-acid chain; its full sequence is Light-independent protochlorophyllide reductase subunit N (440 aa).

Positions 15, 40, and 99 each coordinate [4Fe-4S] cluster.

This sequence belongs to the BchN/ChlN family. Protochlorophyllide reductase is composed of three subunits; BchL, BchN and BchB. Forms a heterotetramer of two BchB and two BchN subunits. The cofactor is [4Fe-4S] cluster.

The enzyme catalyses chlorophyllide a + oxidized 2[4Fe-4S]-[ferredoxin] + 2 ADP + 2 phosphate = protochlorophyllide a + reduced 2[4Fe-4S]-[ferredoxin] + 2 ATP + 2 H2O. Its pathway is porphyrin-containing compound metabolism; bacteriochlorophyll biosynthesis (light-independent). Component of the dark-operative protochlorophyllide reductase (DPOR) that uses Mg-ATP and reduced ferredoxin to reduce ring D of protochlorophyllide (Pchlide) to form chlorophyllide a (Chlide). This reaction is light-independent. The NB-protein (BchN-BchB) is the catalytic component of the complex. In Heliobacterium mobile (Heliobacillus mobilis), this protein is Light-independent protochlorophyllide reductase subunit N.